Here is a 333-residue protein sequence, read N- to C-terminus: 5-formaminoimidazole-4-carboxamide-1-(beta)-D-ribofuranosyl 5'-monophosphate synthetase (333 aa).

5-amino-1-(5-phospho-beta-D-ribosyl)imidazole-4-carboxamide is bound by residues His9 and Ser73. The 231-residue stretch at 94-324 (RNLFEWEANQ…ISREIKLAIN (231 aa)) folds into the ATP-grasp domain. Residues 124–184 (PEDI…VPMY) and Glu206 each bind ATP. 5-amino-1-(5-phospho-beta-D-ribosyl)imidazole-4-carboxamide is bound at residue Asn230. Residues Glu269 and Glu282 each coordinate Mg(2+).

The protein belongs to the phosphohexose mutase family. The cofactor is Mg(2+). Mn(2+) serves as cofactor.

It carries out the reaction 5-amino-1-(5-phospho-beta-D-ribosyl)imidazole-4-carboxamide + formate + ATP = 5-formamido-1-(5-phospho-D-ribosyl)imidazole-4-carboxamide + ADP + phosphate. It functions in the pathway purine metabolism; IMP biosynthesis via de novo pathway; 5-formamido-1-(5-phospho-D-ribosyl)imidazole-4-carboxamide from 5-amino-1-(5-phospho-D-ribosyl)imidazole-4-carboxamide (formate route): step 1/1. Functionally, catalyzes the ATP- and formate-dependent formylation of 5-aminoimidazole-4-carboxamide-1-beta-d-ribofuranosyl 5'-monophosphate (AICAR) to 5-formaminoimidazole-4-carboxamide-1-beta-d-ribofuranosyl 5'-monophosphate (FAICAR) in the absence of folates. The chain is 5-formaminoimidazole-4-carboxamide-1-(beta)-D-ribofuranosyl 5'-monophosphate synthetase from Sulfurisphaera tokodaii (strain DSM 16993 / JCM 10545 / NBRC 100140 / 7) (Sulfolobus tokodaii).